Here is a 658-residue protein sequence, read N- to C-terminus: Glycogen debranching enzyme (658 aa).

The active-site Nucleophile is the aspartate 336. The Proton donor role is filled by glutamate 371. The interval 459–484 (EANGEENRDGTNSNYSDNHGKEGLGG) is disordered.

The protein belongs to the glycosyl hydrolase 13 family.

It carries out the reaction Hydrolysis of (1-&gt;6)-alpha-D-glucosidic linkages to branches with degrees of polymerization of three or four glucose residues in limit dextrin.. Its pathway is glycan degradation; glycogen degradation. Removes maltotriose and maltotetraose chains that are attached by 1,6-alpha-linkage to the limit dextrin main chain, generating a debranched limit dextrin. The protein is Glycogen debranching enzyme of Salmonella choleraesuis (strain SC-B67).